Consider the following 181-residue polypeptide: Inner membrane-spanning protein YciB (181 aa).

Helical transmembrane passes span 3–23 (LLFD…FGIY), 54–74 (SLAI…PWFI), 81–101 (IYWL…KPLI), 119–139 (LNLA…YVAY), and 149–169 (FKLF…AFYL).

The protein belongs to the YciB family.

It is found in the cell inner membrane. Plays a role in cell envelope biogenesis, maintenance of cell envelope integrity and membrane homeostasis. The polypeptide is Inner membrane-spanning protein YciB (Legionella pneumophila (strain Corby)).